The sequence spans 390 residues: 4-hydroxy-3-methylbut-2-en-1-yl diphosphate synthase (flavodoxin) (390 aa).

The [4Fe-4S] cluster site is built by cysteine 281, cysteine 284, cysteine 316, and glutamate 323.

Belongs to the IspG family. [4Fe-4S] cluster is required as a cofactor.

It carries out the reaction (2E)-4-hydroxy-3-methylbut-2-enyl diphosphate + oxidized [flavodoxin] + H2O + 2 H(+) = 2-C-methyl-D-erythritol 2,4-cyclic diphosphate + reduced [flavodoxin]. The protein operates within isoprenoid biosynthesis; isopentenyl diphosphate biosynthesis via DXP pathway; isopentenyl diphosphate from 1-deoxy-D-xylulose 5-phosphate: step 5/6. Converts 2C-methyl-D-erythritol 2,4-cyclodiphosphate (ME-2,4cPP) into 1-hydroxy-2-methyl-2-(E)-butenyl 4-diphosphate. The polypeptide is 4-hydroxy-3-methylbut-2-en-1-yl diphosphate synthase (flavodoxin) (Salinispora tropica (strain ATCC BAA-916 / DSM 44818 / JCM 13857 / NBRC 105044 / CNB-440)).